We begin with the raw amino-acid sequence, 700 residues long: Elongation factor G (700 aa).

A tr-type G domain is found at 10–286 (TKVRNIGIMA…AVVDYLPSPL (277 aa)). GTP-binding positions include 19–26 (AHIDAGKT), 83–87 (DTPGH), and 137–140 (NKMD).

Belongs to the TRAFAC class translation factor GTPase superfamily. Classic translation factor GTPase family. EF-G/EF-2 subfamily.

It is found in the cytoplasm. Catalyzes the GTP-dependent ribosomal translocation step during translation elongation. During this step, the ribosome changes from the pre-translocational (PRE) to the post-translocational (POST) state as the newly formed A-site-bound peptidyl-tRNA and P-site-bound deacylated tRNA move to the P and E sites, respectively. Catalyzes the coordinated movement of the two tRNA molecules, the mRNA and conformational changes in the ribosome. The polypeptide is Elongation factor G (Saccharopolyspora erythraea (strain ATCC 11635 / DSM 40517 / JCM 4748 / NBRC 13426 / NCIMB 8594 / NRRL 2338)).